Consider the following 492-residue polypeptide: MHFNTLTCVLVGLVAHTSAVPTKREAVNSCLTQAKVPTDAQGSQSWKEDGTAYNLRLPFEPAAIAVPTTVAQVSAAVECGAKHGVAISAKSGGHSYTSLGFGGEDGHLMIELDRMYSVKLAKDGTAKIQPGARLGHVATELWNQGKRALAHGTCPGVGLGGHALHGGYGMVARKHGLTLDLMIGATVVLPTGKVVHCSKTENSDLFWGIRGAGANFGVVVELEFQTFAAPEKITYFDIGLNWDQNTAPQGLYDFQEFGKGMPAEITMQMGVSKNGYSVDGAYIGDEASLRKALQPLVQKFGGVQVTATTVDWMGLVTHFAGAGVNVNPTSASYDAHDNFYASSLAAPALTLAEFKSFVNFVSTTGKSSSHSWWLQMDITGGTYSAVSKPKPSDTAYVHRDTLLLFQFYDSVAATAQYPSDGFNLIKGLRQSISSSLKAGTWGMYANYPDSQIKNDRATEMYWGSNVAKLEAVKAKYDPKNLFRNPQSIKPKA.

Residues 1–19 (MHFNTLTCVLVGLVAHTSA) form the signal peptide. One can recognise an FAD-binding PCMH-type domain in the interval 57 to 229 (LPFEPAAIAV…VELEFQTFAA (173 aa)). A cross-link (6-(S-cysteinyl)-8alpha-(pros-histidyl)-FAD (His-Cys)) is located at residues 94–154 (HSYTSLGFGG…GKRALAHGTC (61 aa)).

This sequence belongs to the oxygen-dependent FAD-linked oxidoreductase family. It depends on FAD as a cofactor. The FAD cofactor is bound via a bicovalent 6-S-cysteinyl, 8alpha-N1-histidyl FAD linkage.

The protein localises to the secreted. It carries out the reaction N,N'-diacetylchitobiose + O2 = N,N'-diacetylchitobiono-1,5-lactone + H2O2. The enzyme catalyses N,N',N''-triacetylchitotriose + O2 = N,N',N''-triacetylchitotriono-1,5-lactone + H2O2. The catalysed reaction is N,N',N'',N'''-tetraacetylchitotetraose + O2 = N,N',N'',N'''-tetraacetylchitotetraono-1,5-lactone + H2O2. Its function is as follows. Catalyzes the selective oxidation of C1 hydroxyl moieties on chitooligosaccharides with concomitant reduction of molecular oxygen to hydrogen peroxide. This results in the formation of the corresponding lactones, which typically undergo spontaneous hydrolysis. Chitooligosaccharides are homo- or heterooligomers of N-acetylglucosamine (GlcNAc) and D-glucosamine which are linked through beta-1,4-glycosidic bonds. For optimal substrate binding at least 2 GlcNAc units are needed, and chitooligosaccharide oxidase is most efficient on chitobiose, chitotriose and chitotetraose. The sequence is that of Chitooligosaccharide oxidase from Gibberella zeae (strain ATCC MYA-4620 / CBS 123657 / FGSC 9075 / NRRL 31084 / PH-1) (Wheat head blight fungus).